The chain runs to 807 residues: Leucine--tRNA ligase (807 aa).

The 'HIGH' region signature appears at 40 to 51 (PYPSGSGLHVGH). A 'KMSKS' region motif is present at residues 576 to 580 (KMSKS). Lysine 579 is an ATP binding site.

The protein belongs to the class-I aminoacyl-tRNA synthetase family.

It localises to the cytoplasm. The enzyme catalyses tRNA(Leu) + L-leucine + ATP = L-leucyl-tRNA(Leu) + AMP + diphosphate. This is Leucine--tRNA ligase from Chlorobaculum parvum (strain DSM 263 / NCIMB 8327) (Chlorobium vibrioforme subsp. thiosulfatophilum).